Consider the following 107-residue polypeptide: Parvalbumin beta 2 (107 aa).

Ser-1 is subject to N-acetylserine. EF-hand domains are found at residues 37–72 (XSPD…FSAS) and 89–107 (DADG…LVKQ). Residues Asp-50, Asp-52, Ser-54, Phe-56, Glu-58, Glu-61, Asp-89, Asp-91, Asp-93, Met-95, and Glu-100 each coordinate Ca(2+).

Belongs to the parvalbumin family.

In muscle, parvalbumin is thought to be involved in relaxation after contraction. It binds two calcium ions. This is Parvalbumin beta 2 from Oncorhynchus mykiss (Rainbow trout).